A 291-amino-acid polypeptide reads, in one-letter code: Membrane protein insertase YidC (291 aa).

The N-terminal stretch at 1 to 19 (MKKKALLPLLLGVMVFLAG) is a signal peptide. A lipid anchor (N-palmitoyl cysteine) is attached at Cys-20. Cys-20 carries the S-diacylglycerol cysteine lipid modification. The next 4 membrane-spanning stretches (helical) occupy residues 56 to 76 (YGIA…PFML), 134 to 154 (ALGC…YFVL), 170 to 190 (WFNL…LYFI), and 211 to 231 (MIVS…ALGL). The disordered stretch occupies residues 266 to 291 (FKENNSNSNKKGKNTQVVSKNNKKKK).

The protein belongs to the OXA1/ALB3/YidC family. Type 2 subfamily.

Its subcellular location is the cell membrane. Required for the insertion and/or proper folding and/or complex formation of integral membrane proteins into the membrane. Involved in integration of membrane proteins that insert both dependently and independently of the Sec translocase complex, as well as at least some lipoproteins. This chain is Membrane protein insertase YidC, found in Staphylococcus haemolyticus (strain JCSC1435).